The sequence spans 483 residues: Phosphoglucosamine mutase (483 aa).

Residue S131 is the Phosphoserine intermediate of the active site. Residues S131, D272, D274, and D276 each contribute to the Mg(2+) site. Residue S131 is modified to Phosphoserine.

This sequence belongs to the phosphohexose mutase family. It depends on Mg(2+) as a cofactor. Post-translationally, activated by phosphorylation.

It carries out the reaction alpha-D-glucosamine 1-phosphate = D-glucosamine 6-phosphate. In terms of biological role, catalyzes the conversion of glucosamine-6-phosphate to glucosamine-1-phosphate. This is Phosphoglucosamine mutase from Magnetococcus marinus (strain ATCC BAA-1437 / JCM 17883 / MC-1).